The primary structure comprises 273 residues: Aspartate/glutamate leucyltransferase (273 aa).

Belongs to the R-transferase family. Bpt subfamily.

Its subcellular location is the cytoplasm. It carries out the reaction N-terminal L-glutamyl-[protein] + L-leucyl-tRNA(Leu) = N-terminal L-leucyl-L-glutamyl-[protein] + tRNA(Leu) + H(+). The enzyme catalyses N-terminal L-aspartyl-[protein] + L-leucyl-tRNA(Leu) = N-terminal L-leucyl-L-aspartyl-[protein] + tRNA(Leu) + H(+). Functions in the N-end rule pathway of protein degradation where it conjugates Leu from its aminoacyl-tRNA to the N-termini of proteins containing an N-terminal aspartate or glutamate. This chain is Aspartate/glutamate leucyltransferase, found in Ruegeria pomeroyi (strain ATCC 700808 / DSM 15171 / DSS-3) (Silicibacter pomeroyi).